The following is a 642-amino-acid chain: Threonine--tRNA ligase (642 aa).

Residues M1–T61 enclose the TGS domain. Positions D243–P534 are catalytic. C334, H385, and H511 together coordinate Zn(2+).

The protein belongs to the class-II aminoacyl-tRNA synthetase family. Homodimer. It depends on Zn(2+) as a cofactor.

The protein resides in the cytoplasm. The catalysed reaction is tRNA(Thr) + L-threonine + ATP = L-threonyl-tRNA(Thr) + AMP + diphosphate + H(+). Functionally, catalyzes the attachment of threonine to tRNA(Thr) in a two-step reaction: L-threonine is first activated by ATP to form Thr-AMP and then transferred to the acceptor end of tRNA(Thr). Also edits incorrectly charged L-seryl-tRNA(Thr). This is Threonine--tRNA ligase from Photorhabdus laumondii subsp. laumondii (strain DSM 15139 / CIP 105565 / TT01) (Photorhabdus luminescens subsp. laumondii).